The chain runs to 1120 residues: Hachiman protein HamB (1120 aa).

One can recognise a Helicase ATP-binding domain in the interval 278–452 (DGELLKNDGF…WIGEDDKAKR (175 aa)). 291 to 298 (MPTSSGKT) serves as a coordination point for ATP. The DEAH box motif lies at 395–398 (DEGH). In terms of domain architecture, Helicase C-terminal spans 521 to 710 (ATATKMLDVG…NIEKATSGLY (190 aa)).

It belongs to the helicase family.

Its function is as follows. Component of antiviral defense system Hachiman, composed of HamA and HamB. Expression of Hachiman in B.subtilis (strain BEST7003) confers resistance to phages phi105, phi29, phi3T, rho14, SBSphiJ, SpBeta and SPR. Probably a helicase. This chain is Hachiman protein HamB, found in Bacillus cereus.